Consider the following 614-residue polypeptide: Phosphomethylpyrimidine synthase (614 aa).

Positions 1 to 16 (MNAQLSALQQQAQQLS) are enriched in low complexity. Residues 1–36 (MNAQLSALQQQAQQLSESVTRPIPGSRKIHVPGSRP) are disordered. Residues Asn230, Met259, Tyr288, His324, 344–346 (SRG), 385–388 (DGLR), and Glu424 each bind substrate. Residue His428 coordinates Zn(2+). Tyr451 is a binding site for substrate. His492 is a Zn(2+) binding site. Residues Cys572, Cys575, and Cys580 each coordinate [4Fe-4S] cluster.

The protein belongs to the ThiC family. As to quaternary structure, homodimer. [4Fe-4S] cluster is required as a cofactor.

The enzyme catalyses 5-amino-1-(5-phospho-beta-D-ribosyl)imidazole + S-adenosyl-L-methionine = 4-amino-2-methyl-5-(phosphooxymethyl)pyrimidine + CO + 5'-deoxyadenosine + formate + L-methionine + 3 H(+). The protein operates within cofactor biosynthesis; thiamine diphosphate biosynthesis. In terms of biological role, catalyzes the synthesis of the hydroxymethylpyrimidine phosphate (HMP-P) moiety of thiamine from aminoimidazole ribotide (AIR) in a radical S-adenosyl-L-methionine (SAM)-dependent reaction. The sequence is that of Phosphomethylpyrimidine synthase from Stenotrophomonas maltophilia (strain R551-3).